The primary structure comprises 478 residues: Islet cell autoantigen 1 (478 aa).

The AH domain maps to 50 to 253 (ASDADLDAKL…TSHTMAAIHE (204 aa)). Basic and acidic residues predominate over residues 306 to 317 (EHKDSSAYKTEE). Disordered stretches follow at residues 306 to 365 (EHKD…SGDK) and 398 to 422 (LKEP…GFLP).

Predominantly expressed in brain, pancreas and stomach mucosa. High expression also found in stomach muscle and testis.

It is found in the cytoplasm. The protein localises to the cytosol. The protein resides in the golgi apparatus membrane. Its subcellular location is the cytoplasmic vesicle. It localises to the secretory vesicle membrane. It is found in the secretory vesicle. The protein localises to the synaptic vesicle membrane. May play a role in neurotransmitter secretion. The protein is Islet cell autoantigen 1 of Mus musculus (Mouse).